A 477-amino-acid chain; its full sequence is Ribulose bisphosphate carboxylase large chain (477 aa).

Residues 1 to 2 (MS) constitute a propeptide that is removed on maturation. Pro3 bears the N-acetylproline mark. An N6,N6,N6-trimethyllysine modification is found at Lys14. Positions 123 and 173 each coordinate substrate. Lys175 acts as the Proton acceptor in catalysis. Lys177 lines the substrate pocket. Residues Lys201, Asp203, and Glu204 each coordinate Mg(2+). At Lys201 the chain carries N6-carboxylysine. His294 acts as the Proton acceptor in catalysis. 3 residues coordinate substrate: Arg295, His327, and Ser379.

The protein belongs to the RuBisCO large chain family. Type I subfamily. In terms of assembly, heterohexadecamer of 8 large chains and 8 small chains; disulfide-linked. The disulfide link is formed within the large subunit homodimers. It depends on Mg(2+) as a cofactor. The disulfide bond which can form in the large chain dimeric partners within the hexadecamer appears to be associated with oxidative stress and protein turnover.

The protein resides in the plastid. It is found in the chloroplast. It carries out the reaction 2 (2R)-3-phosphoglycerate + 2 H(+) = D-ribulose 1,5-bisphosphate + CO2 + H2O. The catalysed reaction is D-ribulose 1,5-bisphosphate + O2 = 2-phosphoglycolate + (2R)-3-phosphoglycerate + 2 H(+). In terms of biological role, ruBisCO catalyzes two reactions: the carboxylation of D-ribulose 1,5-bisphosphate, the primary event in carbon dioxide fixation, as well as the oxidative fragmentation of the pentose substrate in the photorespiration process. Both reactions occur simultaneously and in competition at the same active site. The chain is Ribulose bisphosphate carboxylase large chain from Nicotiana acuminata (Acuminate tobacco).